The primary structure comprises 324 residues: Lignin-forming anionic peroxidase (324 aa).

The first 22 residues, 1 to 22 (MSFLRFVGAILFLVAIFGASNA), serve as a signal peptide directing secretion. At Gln23 the chain carries Pyrrolidone carboxylic acid. 4 cysteine pairs are disulfide-bonded: Cys33-Cys111, Cys66-Cys71, Cys117-Cys320, and Cys196-Cys228. Residue Asn35 is glycosylated (N-linked (GlcNAc...) asparagine). The active-site Proton acceptor is the His64. Residues Asp65, Val68, Gly70, Asp72, and Ser74 each contribute to the Ca(2+) site. The N-linked (GlcNAc...) asparagine glycan is linked to Asn150. Pro159 serves as a coordination point for substrate. His189 is a binding site for heme b. Thr190 serves as a coordination point for Ca(2+). A glycan (N-linked (GlcNAc...) asparagine) is linked at Asn207. Positions 242, 245, and 250 each coordinate Ca(2+).

Belongs to the peroxidase family. Classical plant (class III) peroxidase subfamily. Requires Ca(2+) as cofactor. It depends on heme b as a cofactor.

Its subcellular location is the secreted. The enzyme catalyses 2 a phenolic donor + H2O2 = 2 a phenolic radical donor + 2 H2O. Removal of H(2)O(2), oxidation of toxic reductants, biosynthesis and degradation of lignin, suberization, auxin catabolism, response to environmental stresses such as wounding, pathogen attack and oxidative stress. These functions might be dependent on each isozyme/isoform in each plant tissue. Its function is as follows. Plays an integral role in secondary cell wall biosynthesis by the polymerization of cinnamyl alcohols into lignin and by forming rigid cross-links between cellulose, pectin, hydroxy-proline-rich glycoproteins, and lignin. In Nicotiana tabacum (Common tobacco), this protein is Lignin-forming anionic peroxidase.